The sequence spans 296 residues: Bifunctional protein FolD (296 aa).

NADP(+) is bound by residues 166-168 (GRS), Ser195, and Ile236.

The protein belongs to the tetrahydrofolate dehydrogenase/cyclohydrolase family. Homodimer.

The catalysed reaction is (6R)-5,10-methylene-5,6,7,8-tetrahydrofolate + NADP(+) = (6R)-5,10-methenyltetrahydrofolate + NADPH. The enzyme catalyses (6R)-5,10-methenyltetrahydrofolate + H2O = (6R)-10-formyltetrahydrofolate + H(+). The protein operates within one-carbon metabolism; tetrahydrofolate interconversion. Functionally, catalyzes the oxidation of 5,10-methylenetetrahydrofolate to 5,10-methenyltetrahydrofolate and then the hydrolysis of 5,10-methenyltetrahydrofolate to 10-formyltetrahydrofolate. This is Bifunctional protein FolD from Chlorobium limicola (strain DSM 245 / NBRC 103803 / 6330).